Here is an 887-residue protein sequence, read N- to C-terminus: Replication origin-binding protein (887 aa).

The tract at residues 1-28 (MPSIGPIPTIPDEGSRGSSATAAPRRAM) is disordered. Residues 93-258 (PNNPSSRRVT…ASARGERSVH (166 aa)) form the Helicase ATP-binding domain. Residue 106–113 (APMGSGKT) coordinates ATP.

This sequence belongs to the herpesviridae OriBP family. In terms of assembly, homodimer. Interacts with the major DNA-binding protein. Interacts with the DNA helicase/primase complex-associated protein and the polymerase accessory protein.

Its subcellular location is the host nucleus. Its function is as follows. Functions as a docking protein to recruit essential components of the viral replication machinery to viral DNA origins. In the presence of the major DNA-binding protein, opens dsDNA leading to a conformational change in the origin that facilitates DNA unwinding and subsequent replication. This Equus caballus (Horse) protein is Replication origin-binding protein.